The sequence spans 218 residues: Adenylate kinase (218 aa).

10 to 15 (GAGKGT) lines the ATP pocket. The segment at 30–59 (STGDMLRAAVKAQSELGMAAKKVMDEGGLV) is NMP. AMP is bound by residues Thr-31, Arg-36, 57–59 (GLV), 85–88 (GFPR), and Gln-92. Residues 122–159 (GRRVHPASGRTYHIVFNPPAVEGKDDVTGEDLVQRDDD) are LID. ATP-binding positions include Arg-123 and 132–133 (TY). Positions 156 and 167 each coordinate AMP. An ATP-binding site is contributed by Gly-203.

Belongs to the adenylate kinase family. As to quaternary structure, monomer.

It is found in the cytoplasm. The enzyme catalyses AMP + ATP = 2 ADP. It participates in purine metabolism; AMP biosynthesis via salvage pathway; AMP from ADP: step 1/1. Its function is as follows. Catalyzes the reversible transfer of the terminal phosphate group between ATP and AMP. Plays an important role in cellular energy homeostasis and in adenine nucleotide metabolism. This Chlorobaculum parvum (strain DSM 263 / NCIMB 8327) (Chlorobium vibrioforme subsp. thiosulfatophilum) protein is Adenylate kinase.